The following is a 215-amino-acid chain: MNIILFGPPGAGKGTQAKKLVDFYGIPQISTGDILRANVREGTELGLAAKAYMDKGELVPDQVLIGIIKNRLNEADCEKGFILDGYPRTVPQADALEAILDEIEKPIDVVLNLEVPDEVLVGRISGRLMCKCGASYHIISNPPKKDNVCDICGGEVFQRADDTAEAVQNRLDVYKKQTQPLINYYKEKGILVTLDGTKEIDVVFEDLKAILAKFA.

An ATP-binding site is contributed by 10 to 15 (GAGKGT). An NMP region spans residues 30–59 (STGDILRANVREGTELGLAAKAYMDKGELV). AMP contacts are provided by residues T31, R36, 57-59 (ELV), 85-88 (GYPR), and Q92. The segment at 126-162 (GRLMCKCGASYHIISNPPKKDNVCDICGGEVFQRADD) is LID. R127 contacts ATP. Zn(2+) contacts are provided by C130 and C132. ATP is bound at residue 135–136 (SY). Residues C149 and C152 each coordinate Zn(2+). Positions 159 and 170 each coordinate AMP. K198 contacts ATP.

Belongs to the adenylate kinase family. In terms of assembly, monomer.

The protein localises to the cytoplasm. It carries out the reaction AMP + ATP = 2 ADP. The protein operates within purine metabolism; AMP biosynthesis via salvage pathway; AMP from ADP: step 1/1. Its function is as follows. Catalyzes the reversible transfer of the terminal phosphate group between ATP and AMP. Plays an important role in cellular energy homeostasis and in adenine nucleotide metabolism. The chain is Adenylate kinase from Methanosarcina acetivorans (strain ATCC 35395 / DSM 2834 / JCM 12185 / C2A).